A 244-amino-acid chain; its full sequence is tRNA (guanine-N(1)-)-methyltransferase (244 aa).

S-adenosyl-L-methionine contacts are provided by residues G111 and I130–L135.

The protein belongs to the RNA methyltransferase TrmD family. As to quaternary structure, homodimer.

Its subcellular location is the cytoplasm. It catalyses the reaction guanosine(37) in tRNA + S-adenosyl-L-methionine = N(1)-methylguanosine(37) in tRNA + S-adenosyl-L-homocysteine + H(+). Functionally, specifically methylates guanosine-37 in various tRNAs. The protein is tRNA (guanine-N(1)-)-methyltransferase of Phytoplasma australiense.